We begin with the raw amino-acid sequence, 118 residues long: Basic phospholipase A2 4 (118 aa).

7 cysteine pairs are disulfide-bonded: C11-C71, C27-C117, C29-C45, C44-C98, C51-C91, C60-C84, and C78-C89. 3 residues coordinate Ca(2+): Y28, G30, and G32. The active site involves H48. D49 contributes to the Ca(2+) binding site. The active site involves D92.

This sequence belongs to the phospholipase A2 family. Group I subfamily. D49 sub-subfamily. In terms of assembly, monomer. Ca(2+) serves as cofactor. In terms of tissue distribution, expressed by the venom gland.

It is found in the secreted. It catalyses the reaction a 1,2-diacyl-sn-glycero-3-phosphocholine + H2O = a 1-acyl-sn-glycero-3-phosphocholine + a fatty acid + H(+). PLA2 catalyzes the calcium-dependent hydrolysis of the 2-acyl groups in 3-sn-phosphoglycerides. In Laticauda semifasciata (Black-banded sea krait), this protein is Basic phospholipase A2 4.